A 298-amino-acid polypeptide reads, in one-letter code: Myoblast determination protein 1 homolog (298 aa).

Residues 53–73 (PEEHPHTRAPPREPTEEEHVR) show a composition bias toward basic and acidic residues. A disordered region spans residues 53–77 (PEEHPHTRAPPREPTEEEHVRAPSG). Positions 100-151 (DRRKAATMRERRRLSKVNEAFETLKRCTSTNPNQRLPKVEILRNAIRYIESL) constitute a bHLH domain. Disordered stretches follow at residues 170–220 (SGES…GKSS) and 242–298 (CPIL…YQVL). Composition is skewed to polar residues over residues 173-183 (SDASSPRSNCS) and 257-284 (CSPQ…LPQE).

Efficient DNA binding requires dimerization with another bHLH protein. Seems to form active heterodimers with ITF-2.

It localises to the nucleus. In terms of biological role, acts as a transcriptional activator that promotes transcription of muscle-specific target genes and plays a role in muscle differentiation. Induces fibroblasts to differentiate into myoblasts. Interacts with and is inhibited by the twist protein. This interaction probably involves the basic domains of both proteins. The chain is Myoblast determination protein 1 homolog (MYOD1) from Gallus gallus (Chicken).